We begin with the raw amino-acid sequence, 25 residues long: Chlorocatechol 1,2-dioxygenase 1 (25 aa).

This sequence belongs to the intradiol ring-cleavage dioxygenase family. Fe(3+) serves as cofactor.

It carries out the reaction 3,5-dichlorocatechol + O2 = (2E,4E)-2,4-dichloromuconate + 2 H(+). It participates in xenobiotic degradation; 2-(2,4-dichlorophenoxy)propanoate degradation. The sequence is that of Chlorocatechol 1,2-dioxygenase 1 (tfdC) from Delftia acidovorans (Pseudomonas acidovorans).